Here is a 329-residue protein sequence, read N- to C-terminus: Glutamyl-Q tRNA(Asp) synthetase (329 aa).

Residues arginine 8–serine 12 and glutamate 44 each bind L-glutamate. The 'HIGH' region motif lies at proline 11–asparagine 21. Zn(2+) contacts are provided by cysteine 100, cysteine 102, tyrosine 129, and cysteine 133. 2 residues coordinate L-glutamate: tyrosine 196 and arginine 214. The 'KMSKS' region motif lies at arginine 252 to arginine 256. Lysine 255 is an ATP binding site.

It belongs to the class-I aminoacyl-tRNA synthetase family. GluQ subfamily. The cofactor is Zn(2+).

Functionally, catalyzes the tRNA-independent activation of glutamate in presence of ATP and the subsequent transfer of glutamate onto a tRNA(Asp). Glutamate is transferred on the 2-amino-5-(4,5-dihydroxy-2-cyclopenten-1-yl) moiety of the queuosine in the wobble position of the QUC anticodon. The protein is Glutamyl-Q tRNA(Asp) synthetase of Rhodopirellula baltica (strain DSM 10527 / NCIMB 13988 / SH1).